The chain runs to 21 residues: 20 kDa chaperonin, chloroplastic (21 aa).

The protein belongs to the GroES chaperonin family. Forms stable complexes with CPN60 in the presence of ATP.

The protein localises to the plastid. It is found in the chloroplast. Its function is as follows. Seems to function only as a co-chaperone, along with cpn60, and in certain cases is essential for the discharge of biologically active proteins from cpn60. This Pisum sativum (Garden pea) protein is 20 kDa chaperonin, chloroplastic (CPN21).